Reading from the N-terminus, the 394-residue chain is Elongation factor Tu-A (394 aa).

The tr-type G domain occupies 10 to 204 (KPHVNVGTIG…HLDTYIPEPQ (195 aa)). A G1 region spans residues 19 to 26 (GHVDHGKT). 19-26 (GHVDHGKT) is a GTP binding site. Residue Thr-26 participates in Mg(2+) binding. The segment at 60 to 64 (GITIN) is G2. Residues 81 to 84 (DCPG) are G3. GTP is bound by residues 81–85 (DCPGH) and 136–139 (NKCD). Residues 136–139 (NKCD) are G4. Residues 174-176 (SAL) are G5.

Belongs to the TRAFAC class translation factor GTPase superfamily. Classic translation factor GTPase family. EF-Tu/EF-1A subfamily. In terms of assembly, monomer.

It is found in the cytoplasm. It catalyses the reaction GTP + H2O = GDP + phosphate + H(+). GTP hydrolase that promotes the GTP-dependent binding of aminoacyl-tRNA to the A-site of ribosomes during protein biosynthesis. The polypeptide is Elongation factor Tu-A (Pasteurella multocida (strain Pm70)).